Consider the following 156-residue polypeptide: Persephin (156 aa).

Positions 1-21 (MAAGRLRILFLLLLSLHLGLG) are cleaved as a signal peptide. Disulfide bonds link Cys-66/Cys-124, Cys-93/Cys-152, and Cys-97/Cys-154.

Belongs to the TGF-beta family. GDNF subfamily. In terms of assembly, homodimer; disulfide-linked. Interacts with GFRA4 coreceptor and RET: forms a 2:2:2 ternary complex composed of PSPN ligand, GFRA4 and RET receptor. As to expression, expressed at low levels in substantia nigra. Cochlea.

It localises to the secreted. Functionally, growth factor that exhibits neurotrophic activity on mesencephalic dopaminergic and motor neurons. Acts by binding to its coreceptor, GFRA4, leading to autophosphorylation and activation of the RET receptor. The chain is Persephin from Rattus norvegicus (Rat).